The following is a 153-amino-acid chain: 3-hydroxyacyl-[acyl-carrier-protein] dehydratase FabZ (153 aa).

Histidine 47 is a catalytic residue.

The protein belongs to the thioester dehydratase family. FabZ subfamily.

The protein resides in the cytoplasm. It catalyses the reaction a (3R)-hydroxyacyl-[ACP] = a (2E)-enoyl-[ACP] + H2O. Involved in unsaturated fatty acids biosynthesis. Catalyzes the dehydration of short chain beta-hydroxyacyl-ACPs and long chain saturated and unsaturated beta-hydroxyacyl-ACPs. This Dichelobacter nodosus (strain VCS1703A) protein is 3-hydroxyacyl-[acyl-carrier-protein] dehydratase FabZ.